The following is a 69-amino-acid chain: uncharacterized protein (69 aa).

The Cytoplasmic segment spans residues 1-15; that stretch reads MLLYIVIIVACIISK. Residues 16 to 36 form a helical membrane-spanning segment; that stretch reads LVPNEYWAIHLFFIIMIFMVY. The Extracellular portion of the chain corresponds to 37-69; the sequence is MYKKLDIHQKYQFWNYTMSGLSGHNVQVTCKCY. N51 is a glycosylation site (N-linked (GlcNAc...) asparagine; by host).

It belongs to the asfivirus X69R family.

It localises to the host membrane. This is an uncharacterized protein from African swine fever virus (isolate Tick/Malawi/Lil 20-1/1983) (ASFV).